Consider the following 124-residue polypeptide: Small ribosomal subunit protein uS12 (124 aa).

At Asp-89 the chain carries 3-methylthioaspartic acid.

This sequence belongs to the universal ribosomal protein uS12 family. In terms of assembly, part of the 30S ribosomal subunit. Contacts proteins S8 and S17. May interact with IF1 in the 30S initiation complex.

Its function is as follows. With S4 and S5 plays an important role in translational accuracy. In terms of biological role, interacts with and stabilizes bases of the 16S rRNA that are involved in tRNA selection in the A site and with the mRNA backbone. Located at the interface of the 30S and 50S subunits, it traverses the body of the 30S subunit contacting proteins on the other side and probably holding the rRNA structure together. The combined cluster of proteins S8, S12 and S17 appears to hold together the shoulder and platform of the 30S subunit. This Shewanella sp. (strain ANA-3) protein is Small ribosomal subunit protein uS12.